The primary structure comprises 236 residues: Ubiquinone biosynthesis O-methyltransferase (236 aa).

Arginine 39, glycine 59, aspartate 80, and methionine 124 together coordinate S-adenosyl-L-methionine.

The protein belongs to the methyltransferase superfamily. UbiG/COQ3 family.

It catalyses the reaction a 3-demethylubiquinol + S-adenosyl-L-methionine = a ubiquinol + S-adenosyl-L-homocysteine + H(+). The catalysed reaction is a 3-(all-trans-polyprenyl)benzene-1,2-diol + S-adenosyl-L-methionine = a 2-methoxy-6-(all-trans-polyprenyl)phenol + S-adenosyl-L-homocysteine + H(+). The protein operates within cofactor biosynthesis; ubiquinone biosynthesis. In terms of biological role, O-methyltransferase that catalyzes the 2 O-methylation steps in the ubiquinone biosynthetic pathway. This chain is Ubiquinone biosynthesis O-methyltransferase, found in Shewanella halifaxensis (strain HAW-EB4).